Reading from the N-terminus, the 398-residue chain is G2/mitotic-specific cyclin-B2 (398 aa).

Disordered stretches follow at residues 1–26 (MALL…KPKS) and 53–76 (AQNT…KPTA). At threonine 8 the chain carries Phosphothreonine. Polar residues predominate over residues 8 to 23 (TVSTDLENNDTGVNSK). The span at 55–69 (NTKVPVPPTKTTNVN) shows a compositional bias: low complexity. Residues serine 77 and serine 92 each carry the phosphoserine modification. At threonine 94 the chain carries Phosphothreonine. Phosphoserine occurs at positions 99, 392, and 398.

Belongs to the cyclin family. Cyclin AB subfamily. In terms of assembly, interacts with the CDK1 protein kinase to form a serine/threonine kinase holoenzyme complex also known as maturation promoting factor (MPF). The cyclin subunit imparts substrate specificity to the complex.

Its function is as follows. Essential for the control of the cell cycle at the G2/M (mitosis) transition. The polypeptide is G2/mitotic-specific cyclin-B2 (CCNB2) (Bos taurus (Bovine)).